Consider the following 911-residue polypeptide: Probable dipeptidyl-aminopeptidase B (911 aa).

The interval 1–39 is disordered; that stretch reads MPRPRAAKEEETELLAQHQESPRPSSDGSEASASSISTT. The Cytoplasmic portion of the chain corresponds to 1-97; the sequence is MPRPRAAKEE…TPVDKKARRT (97 aa). Residues 25–39 are compositionally biased toward low complexity; it reads SSDGSEASASSISTT. Residues 98 to 118 traverse the membrane as a helical; Signal-anchor for type II membrane protein segment; the sequence is LWIVGTICAVGWALALVSFLM. At 119-911 the chain is on the vacuolar side; it reads NGNYKHSSTR…AQADARSLGR (793 aa). N-linked (GlcNAc...) asparagine glycosylation is found at asparagine 268 and asparagine 564. Serine 755 acts as the Charge relay system in catalysis. The N-linked (GlcNAc...) asparagine glycan is linked to asparagine 809. Catalysis depends on charge relay system residues aspartate 832 and histidine 865.

Belongs to the peptidase S9B family.

The protein resides in the vacuole membrane. The catalysed reaction is Release of an N-terminal dipeptide, Xaa-Yaa-|-Zaa-, from a polypeptide, preferentially when Yaa is Pro, provided Zaa is neither Pro nor hydroxyproline.. Functionally, type IV dipeptidyl-peptidase which removes N-terminal dipeptides sequentially from polypeptides having unsubstituted N-termini provided that the penultimate residue is proline. The chain is Probable dipeptidyl-aminopeptidase B (DAPB) from Phaeosphaeria nodorum (strain SN15 / ATCC MYA-4574 / FGSC 10173) (Glume blotch fungus).